The following is a 235-amino-acid chain: 7-cyano-7-deazaguanine synthase (235 aa).

11 to 21 is a binding site for ATP; that stretch reads FSGGQDSTTCV. Zn(2+)-binding residues include Cys199, Cys214, Cys217, and Cys220.

The protein belongs to the QueC family. Zn(2+) is required as a cofactor.

The enzyme catalyses 7-carboxy-7-deazaguanine + NH4(+) + ATP = 7-cyano-7-deazaguanine + ADP + phosphate + H2O + H(+). It participates in purine metabolism; 7-cyano-7-deazaguanine biosynthesis. Its function is as follows. Catalyzes the ATP-dependent conversion of 7-carboxy-7-deazaguanine (CDG) to 7-cyano-7-deazaguanine (preQ(0)). The protein is 7-cyano-7-deazaguanine synthase of Janthinobacterium sp. (strain Marseille) (Minibacterium massiliensis).